Consider the following 31-residue polypeptide: Cytochrome b6-f complex subunit 6 (31 aa).

The helical transmembrane segment at 4-24 threads the bilayer; it reads LISYISLLAGFVIIASVFYLA.

This sequence belongs to the PetL family. The 4 large subunits of the cytochrome b6-f complex are cytochrome b6, subunit IV (17 kDa polypeptide, PetD), cytochrome f and the Rieske protein, while the 4 small subunits are PetG, PetL, PetM and PetN. The complex functions as a dimer.

The protein localises to the plastid. Its subcellular location is the chloroplast thylakoid membrane. Component of the cytochrome b6-f complex, which mediates electron transfer between photosystem II (PSII) and photosystem I (PSI), cyclic electron flow around PSI, and state transitions. PetL is important for photoautotrophic growth as well as for electron transfer efficiency and stability of the cytochrome b6-f complex. This chain is Cytochrome b6-f complex subunit 6, found in Tupiella akineta (Green alga).